The following is a 150-amino-acid chain: MKIIARNKKALFDYSIIERFEAGIVLKGSEVVALRAGRANLKDSFVRIIKSEIFLLNSHISLLHTTHSFYKHEERGARKLLMHRKQIDKLLGKVSIEGYTIVALDLYFNTKNKVKATLALAKGKNLHDKRETLKKKQADLEARAAMKNYK.

Belongs to the SmpB family.

The protein localises to the cytoplasm. In terms of biological role, required for rescue of stalled ribosomes mediated by trans-translation. Binds to transfer-messenger RNA (tmRNA), required for stable association of tmRNA with ribosomes. tmRNA and SmpB together mimic tRNA shape, replacing the anticodon stem-loop with SmpB. tmRNA is encoded by the ssrA gene; the 2 termini fold to resemble tRNA(Ala) and it encodes a 'tag peptide', a short internal open reading frame. During trans-translation Ala-aminoacylated tmRNA acts like a tRNA, entering the A-site of stalled ribosomes, displacing the stalled mRNA. The ribosome then switches to translate the ORF on the tmRNA; the nascent peptide is terminated with the 'tag peptide' encoded by the tmRNA and targeted for degradation. The ribosome is freed to recommence translation, which seems to be the essential function of trans-translation. This chain is SsrA-binding protein, found in Campylobacter jejuni subsp. doylei (strain ATCC BAA-1458 / RM4099 / 269.97).